A 199-amino-acid chain; its full sequence is NADH-quinone oxidoreductase subunit C (199 aa).

This sequence belongs to the complex I 30 kDa subunit family. NDH-1 is composed of 14 different subunits. Subunits NuoB, C, D, E, F, and G constitute the peripheral sector of the complex.

It is found in the cell inner membrane. The catalysed reaction is a quinone + NADH + 5 H(+)(in) = a quinol + NAD(+) + 4 H(+)(out). In terms of biological role, NDH-1 shuttles electrons from NADH, via FMN and iron-sulfur (Fe-S) centers, to quinones in the respiratory chain. The immediate electron acceptor for the enzyme in this species is believed to be ubiquinone. Couples the redox reaction to proton translocation (for every two electrons transferred, four hydrogen ions are translocated across the cytoplasmic membrane), and thus conserves the redox energy in a proton gradient. In Leptothrix cholodnii (strain ATCC 51168 / LMG 8142 / SP-6) (Leptothrix discophora (strain SP-6)), this protein is NADH-quinone oxidoreductase subunit C.